A 293-amino-acid chain; its full sequence is Nucleotide-binding protein OB2468 (293 aa).

14–21 (GMSGAGKT) lines the ATP pocket. Residue 65-68 (DLRG) participates in GTP binding.

Belongs to the RapZ-like family.

Its function is as follows. Displays ATPase and GTPase activities. In Oceanobacillus iheyensis (strain DSM 14371 / CIP 107618 / JCM 11309 / KCTC 3954 / HTE831), this protein is Nucleotide-binding protein OB2468.